We begin with the raw amino-acid sequence, 264 residues long: Thymidylate synthase (264 aa).

DUMP-binding positions include Arg21 and 126–127 (RR). The Nucleophile role is filled by Cys146. Residues 166-169 (RSAD), Asn177, and 207-209 (HLY) each bind dUMP. Residue Asp169 coordinates (6R)-5,10-methylene-5,6,7,8-tetrahydrofolate. Position 263 (Ala263) interacts with (6R)-5,10-methylene-5,6,7,8-tetrahydrofolate.

The protein belongs to the thymidylate synthase family. Bacterial-type ThyA subfamily. Homodimer.

Its subcellular location is the cytoplasm. The catalysed reaction is dUMP + (6R)-5,10-methylene-5,6,7,8-tetrahydrofolate = 7,8-dihydrofolate + dTMP. It functions in the pathway pyrimidine metabolism; dTTP biosynthesis. Its function is as follows. Catalyzes the reductive methylation of 2'-deoxyuridine-5'-monophosphate (dUMP) to 2'-deoxythymidine-5'-monophosphate (dTMP) while utilizing 5,10-methylenetetrahydrofolate (mTHF) as the methyl donor and reductant in the reaction, yielding dihydrofolate (DHF) as a by-product. This enzymatic reaction provides an intracellular de novo source of dTMP, an essential precursor for DNA biosynthesis. The protein is Thymidylate synthase of Nitrobacter hamburgensis (strain DSM 10229 / NCIMB 13809 / X14).